The chain runs to 314 residues: Hydroxyethylthiazole kinase (314 aa).

Met-70 is a substrate binding site. ATP contacts are provided by Arg-145 and Ser-217. Gly-244 serves as a coordination point for substrate.

The protein belongs to the Thz kinase family. Mg(2+) serves as cofactor.

It carries out the reaction 5-(2-hydroxyethyl)-4-methylthiazole + ATP = 4-methyl-5-(2-phosphooxyethyl)-thiazole + ADP + H(+). Its pathway is cofactor biosynthesis; thiamine diphosphate biosynthesis; 4-methyl-5-(2-phosphoethyl)-thiazole from 5-(2-hydroxyethyl)-4-methylthiazole: step 1/1. Its function is as follows. Catalyzes the phosphorylation of the hydroxyl group of 4-methyl-5-beta-hydroxyethylthiazole (THZ). In Bifidobacterium longum (strain DJO10A), this protein is Hydroxyethylthiazole kinase.